The primary structure comprises 294 residues: Deubiquitinase OTUD6B (294 aa).

Disordered regions lie at residues 1–46 (MDEA…RKQL) and 67–120 (AFAQ…ERDE). Polar residues-rich tracts occupy residues 27-36 (KIQSMKNSVP) and 73-86 (PEPT…NGVT). The span at 111–120 (KAAQEKERDE) shows a compositional bias: basic and acidic residues. Residues 150–287 (LQIRQIPSDG…GEHYNSVELL (138 aa)) form the OTU domain. A cys-loop region spans residues 155–161 (IPSDGHC). Residue D158 is part of the active site. The active-site Nucleophile is C161. The interval 222–232 (IVNTPAWGGQL) is variable-loop. A his-loop region spans residues 270-280 (YMRHAYGLGEH). H280 is an active-site residue.

It carries out the reaction Thiol-dependent hydrolysis of ester, thioester, amide, peptide and isopeptide bonds formed by the C-terminal Gly of ubiquitin (a 76-residue protein attached to proteins as an intracellular targeting signal).. In terms of biological role, deubiquitinating enzyme that may play a role in the ubiquitin-dependent regulation of different cellular processes. The sequence is that of Deubiquitinase OTUD6B (otud6b) from Xenopus tropicalis (Western clawed frog).